A 173-amino-acid polypeptide reads, in one-letter code: Peptide methionine sulfoxide reductase MsrA (173 aa).

Residue Cys-10 is part of the active site.

It belongs to the MsrA Met sulfoxide reductase family.

It catalyses the reaction L-methionyl-[protein] + [thioredoxin]-disulfide + H2O = L-methionyl-(S)-S-oxide-[protein] + [thioredoxin]-dithiol. The catalysed reaction is [thioredoxin]-disulfide + L-methionine + H2O = L-methionine (S)-S-oxide + [thioredoxin]-dithiol. In terms of biological role, has an important function as a repair enzyme for proteins that have been inactivated by oxidation. Catalyzes the reversible oxidation-reduction of methionine sulfoxide in proteins to methionine. This chain is Peptide methionine sulfoxide reductase MsrA, found in Nautilia profundicola (strain ATCC BAA-1463 / DSM 18972 / AmH).